A 232-amino-acid polypeptide reads, in one-letter code: 5'-methylthioadenosine/S-adenosylhomocysteine nucleosidase (232 aa).

The active-site Proton acceptor is the E12. Substrate is bound by residues G78, M153, and 174 to 175; that span reads ME. D198 serves as the catalytic Proton donor.

The protein belongs to the PNP/UDP phosphorylase family. MtnN subfamily.

The catalysed reaction is S-adenosyl-L-homocysteine + H2O = S-(5-deoxy-D-ribos-5-yl)-L-homocysteine + adenine. It catalyses the reaction S-methyl-5'-thioadenosine + H2O = 5-(methylsulfanyl)-D-ribose + adenine. It carries out the reaction 5'-deoxyadenosine + H2O = 5-deoxy-D-ribose + adenine. It participates in amino-acid biosynthesis; L-methionine biosynthesis via salvage pathway; S-methyl-5-thio-alpha-D-ribose 1-phosphate from S-methyl-5'-thioadenosine (hydrolase route): step 1/2. Functionally, catalyzes the irreversible cleavage of the glycosidic bond in both 5'-methylthioadenosine (MTA) and S-adenosylhomocysteine (SAH/AdoHcy) to adenine and the corresponding thioribose, 5'-methylthioribose and S-ribosylhomocysteine, respectively. Also cleaves 5'-deoxyadenosine, a toxic by-product of radical S-adenosylmethionine (SAM) enzymes, into 5-deoxyribose and adenine. The sequence is that of 5'-methylthioadenosine/S-adenosylhomocysteine nucleosidase from Anoxybacillus flavithermus (strain DSM 21510 / WK1).